We begin with the raw amino-acid sequence, 138 residues long: MSGTFLGFDFGTKSIGVAVGQRITATARPLPALKAQDGKPDWNVIEKLLKEWQPEAVIVGLPLNMDGTEQPLTARARNFANKIHGRFGVAIVLHDERLSTVEARAGLFEHGGYRALNKGSVDSASAVVILESYFEQSF.

Belongs to the YqgF nuclease family.

The protein resides in the cytoplasm. In terms of biological role, could be a nuclease involved in processing of the 5'-end of pre-16S rRNA. In Klebsiella pneumoniae (strain 342), this protein is Putative pre-16S rRNA nuclease.